Consider the following 318-residue polypeptide: Homoserine O-succinyltransferase (318 aa).

The active-site Acyl-thioester intermediate is the C142. Residues K163 and S192 each contribute to the substrate site. H235 acts as the Proton acceptor in catalysis. The active site involves E237. R249 serves as a coordination point for substrate.

The protein belongs to the MetA family.

The protein resides in the cytoplasm. The enzyme catalyses L-homoserine + succinyl-CoA = O-succinyl-L-homoserine + CoA. It participates in amino-acid biosynthesis; L-methionine biosynthesis via de novo pathway; O-succinyl-L-homoserine from L-homoserine: step 1/1. Transfers a succinyl group from succinyl-CoA to L-homoserine, forming succinyl-L-homoserine. This chain is Homoserine O-succinyltransferase, found in Shewanella putrefaciens (strain CN-32 / ATCC BAA-453).